A 418-amino-acid polypeptide reads, in one-letter code: Pestheic acid cluster transcriptional regulator 1 (418 aa).

The tract at residues 244-272 is disordered; sequence GTAVTTTATTSSSFISKSSEEPSPKRIKP. Positions 245–260 are enriched in low complexity; sequence TAVTTTATTSSSFISK.

Its subcellular location is the nucleus. Functionally, transcription factor that, with ptaR2 and ptaR3, coregulates the expression of the gene cluster that mediates the biosynthesis of pestheic acid, a diphenyl ether which is a biosynthetic precursor of the unique chloropupukeananes. The protein is Pestheic acid cluster transcriptional regulator 1 of Pestalotiopsis fici (strain W106-1 / CGMCC3.15140).